Reading from the N-terminus, the 684-residue chain is Agnestins biosynthesis cluster transcription factor AgnL11 (684 aa).

A DNA-binding region (zn(2)-C6 fungal-type) is located at residues 25 to 51 (CHFCRTKKLKCDRRFPCSNCRARRLSC). Positions 76–103 (NEELSENINELKARLQRLEELISVNAEE) form a coiled coil. Positions 601–644 (KGSASARKDKNPIHGDTDRATPPGSSNLPQHDKSSSSSPAPPVW) are disordered. The span at 606–619 (ARKDKNPIHGDTDR) shows a compositional bias: basic and acidic residues.

Its subcellular location is the nucleus. Its function is as follows. Transcription factor that regulates the expression of the gene cluster that mediates the biosynthesis of agnestins, dihydroxy-xanthone metabolites. In Paecilomyces divaricatus (Penicillium divaricatum), this protein is Agnestins biosynthesis cluster transcription factor AgnL11.